The sequence spans 170 residues: Bifunctional protein PyrR (170 aa).

The PRPP-binding motif lies at 90-102 (LVLVDDVLMSGRT).

This sequence belongs to the purine/pyrimidine phosphoribosyltransferase family. PyrR subfamily.

The catalysed reaction is UMP + diphosphate = 5-phospho-alpha-D-ribose 1-diphosphate + uracil. In terms of biological role, regulates the transcription of the pyrimidine nucleotide (pyr) operon in response to exogenous pyrimidines. Functionally, also displays a weak uracil phosphoribosyltransferase activity which is not physiologically significant. This Pseudomonas aeruginosa (strain LESB58) protein is Bifunctional protein PyrR.